Here is a 280-residue protein sequence, read N- to C-terminus: uncharacterized protein (280 aa).

Positions 1–26 (MNILIKSAVKNFIVFSTALYTSFSFA) are cleaved as a signal peptide.

The protein to E.coli YibQ.

This is an uncharacterized protein from Haemophilus influenzae (strain ATCC 51907 / DSM 11121 / KW20 / Rd).